Consider the following 481-residue polypeptide: Argininosuccinate lyase (481 aa).

The protein belongs to the lyase 1 family. Argininosuccinate lyase subfamily.

The protein localises to the cytoplasm. The catalysed reaction is 2-(N(omega)-L-arginino)succinate = fumarate + L-arginine. Its pathway is amino-acid biosynthesis; L-arginine biosynthesis; L-arginine from L-ornithine and carbamoyl phosphate: step 3/3. In Methanococcus maripaludis (strain C5 / ATCC BAA-1333), this protein is Argininosuccinate lyase.